Reading from the N-terminus, the 163-residue chain is UPF0262 protein RPC_4416 (163 aa).

It belongs to the UPF0262 family.

This chain is UPF0262 protein RPC_4416, found in Rhodopseudomonas palustris (strain BisB18).